The primary structure comprises 430 residues: Hemagglutinin-esterase (430 aa).

The signal sequence occupies residues 1-27; sequence MLRMRVRPPSAIPVFLIFVLLPFVLTS. The segment at 16–133 is esterase domain first part; it reads LIFVLLPFVL…GSFGWVSNKV (118 aa). The Virion surface segment spans residues 28 to 404; the sequence is KPITPHYGPG…ENVDVTSSAY (377 aa). The active-site Nucleophile is Ser-49. A disulfide bond links Cys-53 and Cys-69. Asn-88, Asn-117, Asn-159, Asn-165, Asn-247, Asn-268, and Asn-289 each carry an N-linked (GlcNAc...) asparagine; by host glycan. Cystine bridges form between Cys-120–Cys-168, Cys-207–Cys-284, and Cys-215–Cys-257. The tract at residues 134–274 is receptor binding; sequence GFYSKLYSMA…GVYNATTFGK (141 aa). Residues 275-390 are esterase domain second part; the sequence is FLIYPTKSYC…SCPQYYKLFE (116 aa). Cys-315 and Cys-320 are joined by a disulfide. The N-linked (GlcNAc...) asparagine; by host glycan is linked to Asn-324. Residues Asp-336 and His-339 each act as charge relay system in the active site. Asn-354 carries an N-linked (GlcNAc...) asparagine; by host glycan. Cys-357 and Cys-382 are oxidised to a cystine. Residues 405-425 traverse the membrane as a helical segment; that stretch reads FVATWVLLVLVIILIFILISF. At 426–430 the chain is on the intravirion side; the sequence is CLSSY.

The protein belongs to the influenza type C/coronaviruses hemagglutinin-esterase family. In terms of processing, N-glycosylated.

Its subcellular location is the virion membrane. The protein localises to the host cell membrane. It carries out the reaction N-acetyl-9-O-acetylneuraminate + H2O = N-acetylneuraminate + acetate + H(+). It catalyses the reaction N-acetyl-4-O-acetylneuraminate + H2O = N-acetylneuraminate + acetate + H(+). In terms of biological role, structural protein that makes short spikes at the surface of the virus. Contains receptor binding and receptor-destroying activities. Mediates de-O-acetylation of N-acetyl-9-O-acetylneuraminic acid, which is probably the receptor determinant recognized by the virus on the surface of erythrocytes and susceptible cells. This receptor-destroying activity is important for virus release as it probably helps preventing self-aggregation and ensures the efficient spread of the progeny virus from cell to cell. May serve as a secondary viral attachment protein for initiating infection, the spike protein being the major one. Seems to be a 'luxury' protein that is not absolutely necessary for virus infection in culture. However, its presence in the virus may alter its pathogenicity. May become a target for both the humoral and the cellular branches of the immune system. This is Hemagglutinin-esterase (HE) from Porcine torovirus (strain P10) (PoTV).